The following is a 429-amino-acid chain: 5-methylthioadenosine/S-adenosylhomocysteine deaminase (429 aa).

Positions 66 and 68 each coordinate Zn(2+). Substrate contacts are provided by glutamate 95, arginine 147, arginine 158, and histidine 181. Histidine 208 lines the Zn(2+) pocket. Substrate contacts are provided by glutamate 211 and aspartate 296. Aspartate 296 lines the Zn(2+) pocket.

Belongs to the metallo-dependent hydrolases superfamily. MTA/SAH deaminase family. Requires Zn(2+) as cofactor.

The enzyme catalyses S-adenosyl-L-homocysteine + H2O + H(+) = S-inosyl-L-homocysteine + NH4(+). It carries out the reaction S-methyl-5'-thioadenosine + H2O + H(+) = S-methyl-5'-thioinosine + NH4(+). Its function is as follows. Catalyzes the deamination of 5-methylthioadenosine and S-adenosyl-L-homocysteine into 5-methylthioinosine and S-inosyl-L-homocysteine, respectively. Is also able to deaminate adenosine. This chain is 5-methylthioadenosine/S-adenosylhomocysteine deaminase, found in Caldicellulosiruptor saccharolyticus (strain ATCC 43494 / DSM 8903 / Tp8T 6331).